Reading from the N-terminus, the 394-residue chain is Phosphoglycerate kinase (394 aa).

Substrate-binding positions include 21–23, R36, 59–62, R118, and R151; these read DFN and HLGR. S183 carries the phosphoserine modification. K201 is an ATP binding site. Residue T299 is modified to Phosphothreonine. ATP is bound by residues N316, E323, and 350–353; that span reads GGDS.

The protein belongs to the phosphoglycerate kinase family. In terms of assembly, monomer.

The protein localises to the cytoplasm. The catalysed reaction is (2R)-3-phosphoglycerate + ATP = (2R)-3-phospho-glyceroyl phosphate + ADP. It participates in carbohydrate degradation; glycolysis; pyruvate from D-glyceraldehyde 3-phosphate: step 2/5. The sequence is that of Phosphoglycerate kinase from Geobacillus stearothermophilus (Bacillus stearothermophilus).